The primary structure comprises 250 residues: MSISFSNFDFINSTIQNYLNRKLKSYGDLKYAYLIMNKKKPTDVVIISNYPSEWVEIYRSNNYQHIDPVILTAINKISPFSWDDDLVISSKLKFSRIFNLSKEYDIVNGYTFVLHDPGNNLATLSFMFEENRSGELEEIVQNNKEKLQMLLISAHEKLTSLYREMSKNKNNSKSQEPNIFSQRENEILYWASMGKTYQEIALILGITTSTVKFHIGNVVKKLGVLNAKHAIRLGVEMNLIKPVEPVKARS.

An HTH luxR-type domain is found at 173–238; it reads KSQEPNIFSQ…HAIRLGVEMN (66 aa). The H-T-H motif DNA-binding region spans 197–216; the sequence is YQEIALILGITTSTVKFHIG.

The protein belongs to the autoinducer-regulated transcriptional regulatory protein family.

Its function is as follows. Functions as a potential ohlL-responsive transcriptional regulator. This Dickeya chrysanthemi (Pectobacterium chrysanthemi) protein is Transcriptional activator protein EchR (echR).